The primary structure comprises 396 residues: Tyrosine--tRNA ligase (396 aa).

L-tyrosine is bound at residue Tyr-36. A 'HIGH' region motif is present at residues 41 to 50 (PTANSLHIGN). L-tyrosine-binding residues include Tyr-165 and Gln-169. The 'KMSKS' region signature appears at 225–229 (KMGKT). Lys-228 contacts ATP. The region spanning 331–394 (TNLIDYLVET…KKSFLTIKTV (64 aa)) is the S4 RNA-binding domain.

This sequence belongs to the class-I aminoacyl-tRNA synthetase family. TyrS type 1 subfamily. In terms of assembly, homodimer.

Its subcellular location is the cytoplasm. The catalysed reaction is tRNA(Tyr) + L-tyrosine + ATP = L-tyrosyl-tRNA(Tyr) + AMP + diphosphate + H(+). Catalyzes the attachment of tyrosine to tRNA(Tyr) in a two-step reaction: tyrosine is first activated by ATP to form Tyr-AMP and then transferred to the acceptor end of tRNA(Tyr). This chain is Tyrosine--tRNA ligase, found in Mycoplasma genitalium (strain ATCC 33530 / DSM 19775 / NCTC 10195 / G37) (Mycoplasmoides genitalium).